Consider the following 508-residue polypeptide: MGLPWYRVHTIVLNDPGRLLAVHIMHTALVAGWAGSMALYELAVFDPSDPVLDPMWRQGMFVIPFMTRLGIINSWGGWGITGGTITYPGIWSYEGVAGAHIVFSGLCFLAAIWHWVYWDLEIFTDERTGKPSLDLPKIFGIHLFLAGVACFGFGAFHVTGLYGPGIWVSDPYGLTGKVQYVNPAWGVEGFDPFVPGGIASHHIAAGTLGILAGLFHLSVRPPQRLYKGLRMGNIETVLSSSIAAVFFAAFVVAGTMWYGSATTPIELFGPTRYQWDQGYFQQEIYRRVSTGLAKNQSLSEAWSKIPEKLAFYDYIGNNPAKGGLFRAGSMDNGDGIAVGWLGHPIFRDKEGRELFVRRMPTFFETFPVVLVDGAGIVRADVPFRRAESKYSVEQVGVTVEFYGGELNGVSYNDPATVKKYARRAQLGEIFELDRATLKSDGVFRSSPRGWFTFGHASFALLFFFGHIWHGARTLFRDVFAGIDPDLDAQVEFGAFQKLGDPTTRRQVV.

A run of 6 helical transmembrane segments spans residues 21 to 36, 101 to 115, 140 to 156, 203 to 218, 237 to 252, and 457 to 472; these read AVHI…WAGS, IVFS…IWHW, GIHL…FGAF, IAAG…FHLS, VLSS…AFVV, and SFAL…HGAR.

It belongs to the PsbB/PsbC family. PsbB subfamily. As to quaternary structure, PSII is composed of 1 copy each of membrane proteins PsbA, PsbB, PsbC, PsbD, PsbE, PsbF, PsbH, PsbI, PsbJ, PsbK, PsbL, PsbM, PsbT, PsbX, PsbY, PsbZ, Psb30/Ycf12, at least 3 peripheral proteins of the oxygen-evolving complex and a large number of cofactors. It forms dimeric complexes. Requires Binds multiple chlorophylls. PSII binds additional chlorophylls, carotenoids and specific lipids. as cofactor.

Its subcellular location is the plastid. The protein resides in the chloroplast thylakoid membrane. Its function is as follows. One of the components of the core complex of photosystem II (PSII). It binds chlorophyll and helps catalyze the primary light-induced photochemical processes of PSII. PSII is a light-driven water:plastoquinone oxidoreductase, using light energy to abstract electrons from H(2)O, generating O(2) and a proton gradient subsequently used for ATP formation. The protein is Photosystem II CP47 reaction center protein of Trachelium caeruleum (Blue throatwort).